We begin with the raw amino-acid sequence, 255 residues long: Ribonuclease HII (255 aa).

Residues Glu70–Lys255 enclose the RNase H type-2 domain. A divalent metal cation contacts are provided by Asp76, Glu77, and Asp168.

This sequence belongs to the RNase HII family. Mn(2+) serves as cofactor. It depends on Mg(2+) as a cofactor.

The protein resides in the cytoplasm. It carries out the reaction Endonucleolytic cleavage to 5'-phosphomonoester.. In terms of biological role, endonuclease that specifically degrades the RNA of RNA-DNA hybrids. This Streptococcus thermophilus (strain ATCC BAA-491 / LMD-9) protein is Ribonuclease HII.